Consider the following 273-residue polypeptide: Cysteine protease S273R (273 aa).

Residues His168 and Asn187 contribute to the active site. Gln226 provides a ligand contact to substrate. The active-site Nucleophile is the Cys232.

Belongs to the peptidase C63 family.

Its subcellular location is the host cytoplasm. It is found in the virion. In terms of biological role, cysteine protease that plays several role during infection including processing of the structural polyprotein or inhibition of the host immune response. Catalyzes the maturation of the pp220 and pp62 polyprotein precursors into core-shell proteins. Plays a role in the disruption of host pyroptosis via specific cleavage of gasdermin D/GSDMD. In addition, strongly decreases the host cGAS-STING signaling by targeting IKBKE via its enzymatic activity. Also impairs host FOXJ1-mediated antiviral effect via degradation of FOXJ1. This African swine fever virus (isolate Tick/Malawi/Lil 20-1/1983) (ASFV) protein is Cysteine protease S273R.